Reading from the N-terminus, the 556-residue chain is uncharacterized protein (556 aa).

The disordered stretch occupies residues 69–129; sequence RRGHTSGHAS…SSARSSSTSG (61 aa). 2 stretches are compositionally biased toward low complexity: residues 74–85 and 93–129; these read SGHASEHTSSSR and SMSS…STSG. The chain crosses the membrane as a helical span at residues 379-399; the sequence is LGLYIFIGVLLGLIGVIGLFI. An RING-type; atypical zinc finger spans residues 498–541; sequence CTICLCEYSEESPLYRELPCHHIFHPACIDPYLLKNSDLCPLCK.

Its subcellular location is the vacuole membrane. The protein resides in the cell membrane. This is an uncharacterized protein from Schizosaccharomyces pombe (strain 972 / ATCC 24843) (Fission yeast).